The chain runs to 500 residues: Cytochrome P450 2D20 (500 aa).

C446 serves as a coordination point for heme.

The protein belongs to the cytochrome P450 family. Heme is required as a cofactor.

The protein resides in the endoplasmic reticulum membrane. Its subcellular location is the microsome membrane. The polypeptide is Cytochrome P450 2D20 (CYP2D20) (Mesocricetus auratus (Golden hamster)).